Here is a 275-residue protein sequence, read N- to C-terminus: UPF0758 protein RL2068 (275 aa).

A disordered region spans residues 1–45 (MAKGPVSTSSDDELPFETQEPIAADERSFFGGQPQKPSAPNARAA). The 123-residue stretch at 153-275 (VLSSWSSVIQ…HVSLKGLKLI (123 aa)) folds into the MPN domain. Zn(2+)-binding residues include histidine 224, histidine 226, and aspartate 237. The JAMM motif signature appears at 224–237 (HNHPSGDPTPSRAD).

Belongs to the UPF0758 family.

This Rhizobium johnstonii (strain DSM 114642 / LMG 32736 / 3841) (Rhizobium leguminosarum bv. viciae) protein is UPF0758 protein RL2068.